A 462-amino-acid chain; its full sequence is Sonic hedgehog protein (462 aa).

Positions 1 to 23 (MLLLARCLLLVLVSSLLVCSGLA) are cleaved as a signal peptide. Cys24 carries the N-palmitoyl cysteine lipid modification. The short motif at 32-38 (KRRHPKK) is the Cardin-Weintraub element. Residues Glu89, Glu90, Asp95, Thr125, Glu126, Asp129, and Asp131 each coordinate Ca(2+). His140, Asp147, and His182 together coordinate Zn(2+). Gly197 carries Cholesterol glycine ester lipidation. N-linked (GlcNAc...) asparagine glycosylation is present at Asn278. 2 disordered regions span residues 279–302 (DSAT…LGPR) and 395–414 (TDRG…GRVA). The segment covering 283–292 (GEPEASSGSG) has biased composition (low complexity). Residues 400–412 (DSGGGDRGGGGGR) are compositionally biased toward gly residues.

Belongs to the hedgehog family. Multimer. As to quaternary structure, interacts with HHATL/GUP1 which negatively regulates HHAT-mediated palmitoylation of the SHH N-terminus. Interacts with BOC and CDON. Interacts with HHIP. Interacts with DISP1 via its cholesterol anchor. Interacts with SCUBE2. Interacts with glypican GPC3. In terms of processing, the C-terminal domain displays an autoproteolysis activity and a cholesterol transferase activity. Both activities result in the cleavage of the full-length protein and covalent attachment of a cholesterol moiety to the C-terminal of the newly generated N-terminal fragment (ShhN). Cholesterylation is required for the sonic hedgehog protein N-product targeting to lipid rafts and multimerization. ShhN is the active species in both local and long-range signaling, whereas the C-product (ShhC) is degraded in the endoplasmic reticulum. Post-translationally, N-palmitoylation by HHAT of ShhN is required for sonic hedgehog protein N-product multimerization and full activity. It is a prerequisite for the membrane-proximal positioning and the subsequent shedding of this N-terminal peptide. The lipidated N- and C-terminal peptides of ShhNp can be cleaved (shedding). The N-terminal palmitoylated peptide is cleaved at the Cardin-Weintraub (CW) motif site. The cleavage reduced the interactions with heparan sulfate. The cleavage is enhanced by SCUBE2.

It localises to the endoplasmic reticulum membrane. The protein resides in the golgi apparatus membrane. Its subcellular location is the secreted. The protein localises to the cell membrane. It carries out the reaction glycyl-L-cysteinyl-[protein] + cholesterol + H(+) = [protein]-C-terminal glycyl cholesterol ester + N-terminal L-cysteinyl-[protein]. Its function is as follows. The C-terminal part of the sonic hedgehog protein precursor displays an autoproteolysis and a cholesterol transferase activity. Both activities result in the cleavage of the full-length protein into two parts (ShhN and ShhC) followed by the covalent attachment of a cholesterol moiety to the C-terminal of the newly generated ShhN. Both activities occur in the endoplasmic reticulum. Once cleaved, ShhC is degraded in the endoplasmic reticulum. The dually lipidated sonic hedgehog protein N-product (ShhNp) is a morphogen which is essential for a variety of patterning events during development. Induces ventral cell fate in the neural tube and somites. Involved in the patterning of the anterior-posterior axis of the developing limb bud. Essential for axon guidance. Binds to the patched (PTCH1) receptor, which functions in association with smoothened (SMO), to activate the transcription of target genes. In the absence of SHH, PTCH1 represses the constitutive signaling activity of SMO. This is Sonic hedgehog protein from Homo sapiens (Human).